Consider the following 188-residue polypeptide: Putative protein SSX6 (188 aa).

Disordered regions lie at residues 1–22 (MNGD…EKRS) and 74–188 (KRAT…EDDK). The KRAB-related domain occupies 20 to 83 (KRSKAFDDIA…KRATDSQRND (64 aa)). 2 stretches are compositionally biased toward basic and acidic residues: residues 75 to 96 (RATD…EVER) and 112 to 122 (MPEKPAEEGSD). Residue serine 123 is modified to Phosphoserine. The segment covering 147-156 (SSEKIHERSG) has biased composition (basic and acidic residues). A compositionally biased stretch (basic residues) spans 157-170 (PKRGKHAWTHRLRE). Over residues 179-188 (EISDPEEDDK) the composition is skewed to acidic residues.

Belongs to the SSX family. As to expression, not detected in any normal tissues. Expressed in a melanoma cell line.

Functionally, could act as a modulator of transcription. This chain is Putative protein SSX6, found in Homo sapiens (Human).